The following is an 88-amino-acid chain: UPF0250 protein Ssed_3490 (88 aa).

Belongs to the UPF0250 family.

The polypeptide is UPF0250 protein Ssed_3490 (Shewanella sediminis (strain HAW-EB3)).